The sequence spans 444 residues: N-succinylarginine dihydrolase (444 aa).

Residues 19 to 28, asparagine 110, and 137 to 138 each bind substrate; these read AGLSFGNVAS and HR. The active site involves glutamate 174. Position 214 (arginine 214) interacts with substrate. Histidine 250 is an active-site residue. Residues aspartate 252 and asparagine 362 each contribute to the substrate site. Cysteine 368 serves as the catalytic Nucleophile.

Belongs to the succinylarginine dihydrolase family. Homodimer.

It catalyses the reaction N(2)-succinyl-L-arginine + 2 H2O + 2 H(+) = N(2)-succinyl-L-ornithine + 2 NH4(+) + CO2. The protein operates within amino-acid degradation; L-arginine degradation via AST pathway; L-glutamate and succinate from L-arginine: step 2/5. Functionally, catalyzes the hydrolysis of N(2)-succinylarginine into N(2)-succinylornithine, ammonia and CO(2). The sequence is that of N-succinylarginine dihydrolase from Shewanella denitrificans (strain OS217 / ATCC BAA-1090 / DSM 15013).